Here is a 626-residue protein sequence, read N- to C-terminus: Chaperone protein HtpG (626 aa).

Positions 1–339 are a; substrate-binding; that stretch reads MSQNQETRGF…SNDLPLNVSR (339 aa). Residues 340–555 form a b region; the sequence is EILQDNKITA…NDQMTTQMAK (216 aa). Residues 556–626 are c; that stretch reads LFAAAGQPVP…FIKRINKLLG (71 aa).

This sequence belongs to the heat shock protein 90 family. In terms of assembly, homodimer.

The protein localises to the cytoplasm. Molecular chaperone. Has ATPase activity. This is Chaperone protein HtpG from Haemophilus influenzae (strain ATCC 51907 / DSM 11121 / KW20 / Rd).